The chain runs to 145 residues: MLKKSILPMSCGVLVMVMSGLLDAAEITLISHKTLGSQLRDGMKLATGRIACREPHDGFHIWINASQNGKVGHYIVQNNRETKHELKVKIGGGGWSSSLIEGQRGVYRQGEEKQAIFDIMSDGNQYSAPGEYIFSVSGECLISRG.

Positions 1 to 24 are cleaved as a signal peptide; it reads MLKKSILPMSCGVLVMVMSGLLDA.

To E.coli AfaD.

This is Protein AggB (aggB) from Escherichia coli.